The sequence spans 727 residues: Pentatricopeptide repeat-containing protein At2g33680 (727 aa).

PPR repeat units lie at residues 13–47 (HTST…GAST), 48–78 (CIQH…IICK), 79–116 (DVVS…DILP), 117–150 (NAYT…MSSF), 152–182 (DIYV…MPER), 183–213 (NTYT…FLRE), 220–254 (SDYV…GLLG), 255–285 (FVAL…SGDR), 286–320 (NSIT…GIKP), 321–355 (SEYT…GFER), 356–386 (HLFA…LQER), 387–421 (DVAL…GIIP), 422–456 (NDPT…GFGL), 457–487 (EVPI…TPNK), 488–522 (DVVS…GMEP), 523–553 (DDVT…MSDQ), and 559–593 (KVDH…HGLC). Positions 594 to 669 (LWRILLSACK…EVGCSWIELK (76 aa)) are type E motif. The type E(+) motif stretch occupies residues 670–700 (NQYHVFVVGDTMHPMIEETKDLVCLVSRQMI).

The protein belongs to the PPR family. PCMP-E subfamily.

This chain is Pentatricopeptide repeat-containing protein At2g33680 (PCMP-E19), found in Arabidopsis thaliana (Mouse-ear cress).